The sequence spans 147 residues: Large ribosomal subunit protein uL16 (147 aa).

Positions 1–16 (MLMPKRVKRRRVHRGR) are enriched in basic residues. The tract at residues 1–20 (MLMPKRVKRRRVHRGRMTGQ) is disordered.

It belongs to the universal ribosomal protein uL16 family. Part of the 50S ribosomal subunit.

Functionally, binds 23S rRNA and is also seen to make contacts with the A and possibly P site tRNAs. This chain is Large ribosomal subunit protein uL16, found in Alkaliphilus metalliredigens (strain QYMF).